The primary structure comprises 352 residues: Farnesyl pyrophosphate synthase (352 aa).

Positions 52, 55, and 93 each coordinate isopentenyl diphosphate. Mg(2+) is bound by residues aspartate 100 and aspartate 104. A dimethylallyl diphosphate-binding site is contributed by arginine 109. Arginine 110 provides a ligand contact to isopentenyl diphosphate. Residues lysine 197, threonine 198, glutamine 237, lysine 254, and lysine 263 each contribute to the dimethylallyl diphosphate site.

The protein belongs to the FPP/GGPP synthase family. Mg(2+) serves as cofactor.

It carries out the reaction isopentenyl diphosphate + dimethylallyl diphosphate = (2E)-geranyl diphosphate + diphosphate. It catalyses the reaction isopentenyl diphosphate + (2E)-geranyl diphosphate = (2E,6E)-farnesyl diphosphate + diphosphate. It functions in the pathway isoprenoid biosynthesis; farnesyl diphosphate biosynthesis; farnesyl diphosphate from geranyl diphosphate and isopentenyl diphosphate: step 1/1. It participates in isoprenoid biosynthesis; geranyl diphosphate biosynthesis; geranyl diphosphate from dimethylallyl diphosphate and isopentenyl diphosphate: step 1/1. In terms of biological role, farnesyl pyrophosphate synthase; part of the second module of ergosterol biosynthesis pathway that includes the middle steps of the pathway. ERG20 catalyzes the sequential condensation of isopentenyl pyrophosphate with dimethylallyl pyrophosphate, and then with the resultant geranylpyrophosphate to the ultimate product farnesyl pyrophosphate. The second module is carried out in the vacuole and involves the formation of farnesyl diphosphate, which is also an important intermediate in the biosynthesis of ubiquinone, dolichol, heme and prenylated proteins. Activity by the mevalonate kinase ERG12 first converts mevalonate into 5-phosphomevalonate. 5-phosphomevalonate is then further converted to 5-diphosphomevalonate by the phosphomevalonate kinase ERG8. The diphosphomevalonate decarboxylase MVD1/ERG19 then produces isopentenyl diphosphate. The isopentenyl-diphosphate delta-isomerase IDI1 then catalyzes the 1,3-allylic rearrangement of the homoallylic substrate isopentenyl (IPP) to its highly electrophilic allylic isomer, dimethylallyl diphosphate (DMAPP). Finally the farnesyl diphosphate synthase ERG20 catalyzes the sequential condensation of isopentenyl pyrophosphate with dimethylallyl pyrophosphate, and then with the resultant geranylpyrophosphate to the ultimate product farnesyl pyrophosphate. In Saccharomyces cerevisiae (strain ATCC 204508 / S288c) (Baker's yeast), this protein is Farnesyl pyrophosphate synthase (ERG20).